We begin with the raw amino-acid sequence, 1982 residues long: CASP8-associated protein 2 (1982 aa).

The residue at position 2 (Ala2) is an N-acetylalanine. Ser20 carries the phosphoserine modification. Residues 159 to 191 (VKTKDLKSRSPHLDDCSKTDHRAKSDVSKDVHH) show a composition bias toward basic and acidic residues. The disordered stretch occupies residues 159 to 552 (VKTKDLKSRS…ESGPNETKNK (394 aa)). A Phosphoserine modification is found at Ser194. The segment covering 198-210 (LEKEGKPHSDKRS) has biased composition (basic and acidic residues). Residues 225–240 (GVWSRSHYQVGEGSSN) are compositionally biased toward polar residues. Residues 286–395 (GHPEKYGKGE…ERASLPHSKN (110 aa)) are compositionally biased toward basic and acidic residues. Residues 396-405 (EITFSHNSSK) are compositionally biased toward polar residues. Composition is skewed to basic and acidic residues over residues 406–423 (YHLE…DKSV), 444–455 (KNIDSKEVDAMH), and 463–524 (KAER…KGEV). Ser567 carries the post-translational modification Phosphoserine. The tract at residues 569–593 (AKKQPVSQDNQHKITDIPKSSGVCD) is disordered. Phosphoserine occurs at positions 658, 815, and 875. 3 disordered regions span residues 875-1017 (SPPQ…DKVM), 1157-1188 (FGRD…DNSN), and 1251-1283 (ERSL…HATL). The segment covering 894–904 (SAHSTSKSQSD) has biased composition (polar residues). Basic and acidic residues-rich tracts occupy residues 905 to 924 (LNKE…EADT), 936 to 965 (GEIR…DVRK), 999 to 1016 (KRPD…KDKV), and 1157 to 1170 (FGRD…EKTS). At Ser940 the chain carries Phosphoserine. A Phosphoserine modification is found at Ser1161. Polar residues-rich tracts occupy residues 1171-1181 (KQNAQYSNSQK) and 1269-1281 (GSSI…SQHA). N6-acetyllysine is present on Lys1343. The short motif at 1683–1687 (YVDLT) is the SUMO interaction motif 1 (SIM); mediates the binding to polysumoylated substrates element. The NCOA2-binding stretch occupies residues 1709–1982 (DQLGCSGGNL…MKLFEKSKCR (274 aa)). An SUMO interaction motif 2 (SIM); mediates the binding to polysumoylated substrates motif is present at residues 1737-1741 (FIDLT). An SUMO interaction motif 3 (SIM); mediates the binding to polysumoylated substrates motif is present at residues 1794–1798 (YIDLT). The segment at 1803–1909 (SSCEVKKDEL…IKDSSAALAT (107 aa)) is disordered. Residues 1851-1865 (KETDLTNKEKTKKPT) are compositionally biased toward basic and acidic residues.

As to quaternary structure, self-associates. Component of the death-inducing signaling complex (DISC) with CASP8, FADD and FAS. Interacts with NCOA2 and NCOA3. Interacts with SRRT. Interacts with TRAF2. Interacts with NPAT. Interacts (via SIM domains) with SUMO1 and SUMO2. Interacts with SP100; may negatively regulate CASP8AP2 export from the nucleus to the cytoplasm.

It is found in the cytoplasm. The protein localises to the nucleus. It localises to the PML body. Its subcellular location is the mitochondrion. Functionally, participates in TNF-alpha-induced blockade of glucocorticoid receptor (GR) transactivation at the nuclear receptor coactivator level, upstream and independently of NF-kappa-B. Suppresses both NCOA2- and NCOA3-induced enhancement of GR transactivation. Involved in TNF-alpha-induced activation of NF-kappa-B via a TRAF2-dependent pathway. Acts as a downstream mediator for CASP8-induced activation of NF-kappa-B. Required for the activation of CASP8 in FAS-mediated apoptosis. Required for histone gene transcription and progression through S phase. The protein is CASP8-associated protein 2 of Homo sapiens (Human).